Here is a 553-residue protein sequence, read N- to C-terminus: Transcription factor GAMYB (553 aa).

Residues 1 to 17 (MYRVKSESDCDMIHQEQ) are compositionally biased toward basic and acidic residues. A disordered region spans residues 1 to 45 (MYRVKSESDCDMIHQEQMDSPVADDGSSGGSPHRGGGPPLKKGPW). Residues 27 to 38 (SSGGSPHRGGGP) are compositionally biased toward gly residues. 2 HTH myb-type domains span residues 37–89 (GPPL…ANHL) and 90–144 (RPNL…KRCQ). DNA-binding regions (H-T-H motif) lie at residues 65–89 (WNAV…ANHL) and 117–140 (WARM…NTRI). The interval 464 to 489 (PAQSTSMGSGEQVMGPKYEPGDTSPH) is disordered.

Interacts with MYBS1. Expressed in aleurone cells, inflorescence shoot apical region, stamen primordia, and tapetum cells of the anther. Expressed at low level in roots and vegetative shoots.

It is found in the nucleus. In terms of biological role, transcriptional activator of gibberellin-dependent alpha-amylase expression in aleurone cells. Involved in pollen and floral organs development. May bind to the 5'-TAACAAA-3' box of alpha-amylase promoter. Required for anther development. Functions in parallel with UDT1 to regulate early anther development. Functions upstream of the transcription factor TDR and may positively regulate its transcription. Required for pollen development. Probably required for controlling tapetal cell size and promoting tapetal programmed cell death (PCD) during anther development. Required for exine and Ubisch body formation in anthers. Interacts with the DNA specific motifs of giberrellin-up-regulated genes of anthers and regulates their expression. Positively regulates the expression of the laurate hydroxylase CYP703A3, known to be essential for the development of pollen exine and anther epicuticular layer. Functions with MYBS1 to integrate diverse nutrient starvation and gibberellin (GA) signaling pathways during germination of grains. Sugar, nitrogen and phosphate starvation signals converge and interconnect with GA to promote the co-nuclear import of GAMYB and MYBS1, resulting in the expression of a large set of GA-inducible hydrolases, transporters and regulators that are essential for mobilization of nutrient reserves in the endosperm to support seedling growth. This chain is Transcription factor GAMYB, found in Oryza sativa subsp. japonica (Rice).